The primary structure comprises 415 residues: Glutamyl-tRNA reductase (415 aa).

Residues Thr-49–Arg-52, Ser-104, Glu-109–Gln-111, and Gln-115 each bind substrate. The active-site Nucleophile is Cys-50. Gly-184–Ile-189 contacts NADP(+).

Belongs to the glutamyl-tRNA reductase family. As to quaternary structure, homodimer.

It catalyses the reaction (S)-4-amino-5-oxopentanoate + tRNA(Glu) + NADP(+) = L-glutamyl-tRNA(Glu) + NADPH + H(+). It participates in porphyrin-containing compound metabolism; protoporphyrin-IX biosynthesis; 5-aminolevulinate from L-glutamyl-tRNA(Glu): step 1/2. Catalyzes the NADPH-dependent reduction of glutamyl-tRNA(Glu) to glutamate 1-semialdehyde (GSA). This Neisseria meningitidis serogroup C (strain 053442) protein is Glutamyl-tRNA reductase.